The chain runs to 201 residues: RRARYKKEPVSLTLALLLGGLTMGGIAAGVGTGTTALVATQQFQQLQAAIHDDLKEVEKSITNLEKSLTSLSEVVLQNRRGLDLLFLKEGGLCAALKEECCFYADHTGLVRDSMAKLRERLSQRQKLFESQQGWFEGLFNKSPWFTTLISTVMGPLIILLLILLFGPCILNRLVQFIKDRISVVQALVLTQQYHQLKTIGD.

The Extracellular segment spans residues 1 to 148 (RRARYKKEPV…FNKSPWFTTL (148 aa)). Residues 10 to 30 (VSLTLALLLGGLTMGGIAAGV) are fusion peptide. Residues 39–75 (ATQQFQQLQAAIHDDLKEVEKSITNLEKSLTSLSEVV) adopt a coiled-coil conformation. An immunosuppression region spans residues 76–92 (LQNRRGLDLLFLKEGGL). The short motif at 93-101 (CAALKEECC) is the CX6CC element. Residues 149–169 (ISTVMGPLIILLLILLFGPCI) form a helical membrane-spanning segment. Residue cysteine 168 is the site of S-palmitoyl cysteine; by host attachment. Residues 170-201 (LNRLVQFIKDRISVVQALVLTQQYHQLKTIGD) lie on the Cytoplasmic side of the membrane. Positions 193-196 (YHQL) match the YXXL motif; contains endocytosis signal motif.

The mature envelope protein (Env) consists of a trimer of SU-TM heterodimers attached by a labile interchain disulfide bond. Post-translationally, specific enzymatic cleavages in vivo yield mature proteins. Envelope glycoproteins are synthesized as an inactive precursor that is N-glycosylated and processed likely by host cell furin or by a furin-like protease in the Golgi to yield the mature SU and TM proteins. The cleavage site between SU and TM requires the minimal sequence [KR]-X-[KR]-R. The R-peptide is released from the C-terminus of the cytoplasmic tail of the TM protein upon particle formation as a result of proteolytic cleavage by the viral protease. Cleavage of this peptide is required for TM to become fusogenic. The transmembrane protein is palmitoylated. In terms of processing, the R-peptide is palmitoylated.

It localises to the virion membrane. Its subcellular location is the host cell membrane. Its function is as follows. The surface protein (SU) attaches the virus to the host cell by binding to its receptor. This interaction triggers the refolding of the transmembrane protein (TM) and is thought to activate its fusogenic potential by unmasking its fusion peptide. Fusion occurs at the host cell plasma membrane. In terms of biological role, the transmembrane protein (TM) acts as a class I viral fusion protein. Under the current model, the protein has at least 3 conformational states: pre-fusion native state, pre-hairpin intermediate state, and post-fusion hairpin state. During viral and target cell membrane fusion, the coiled coil regions (heptad repeats) assume a trimer-of-hairpins structure, positioning the fusion peptide in close proximity to the C-terminal region of the ectodomain. The formation of this structure appears to drive apposition and subsequent fusion of viral and target cell membranes. Membranes fusion leads to delivery of the nucleocapsid into the cytoplasm. The sequence is that of Envelope glycoprotein (env) from Mus musculus (Mouse).